Consider the following 333-residue polypeptide: Protein FanF (333 aa).

Residues 1 to 22 (MKNKYNLLFFLFLLCYGDVALA) form the signal peptide.

Post-translationally, three disulfide bonds are present.

It localises to the fimbrium. Its function is as follows. Minor component of K99 fimbriae. Is not required for binding of K99 fimbriae to the ganglioside receptor. May play a role in initiation, elongation and flexibility of the fimbriae. The polypeptide is Protein FanF (fanF) (Escherichia coli).